Consider the following 256-residue polypeptide: MSILEINNLHVSIEGKEILKGVNLTLKTGEVAAIMGPNGTGKSTLSAAIMGNPNYEVTQGQILLDGVNILDLEVDERARLGLFLAMQYPSEIPGITNAEFMRAAMNAGKADEDKISVRDFITKLDEKMALLGMKEEMAERYLNEGFSGGEKKRNEILQLLMLEPKFALLDEIDSGLDIDALKVVSKGVNEMRGKDFGAMIITHYQRLLNYITPDLVHVMMDGRIVLSGDAALATRLEKEGYAGIAQDLGIEYKEES.

One can recognise an ABC transporter domain in the interval L4 to Q246. G36–S43 is a binding site for ATP.

The protein belongs to the ABC transporter superfamily. Ycf16 family.

It is found in the cell membrane. The polypeptide is Probable ABC transporter ATP-binding protein SPy_0285/M5005_Spy0242 (Streptococcus pyogenes serotype M1).